A 354-amino-acid polypeptide reads, in one-letter code: Selection and upkeep of intraepithelial T-cells protein 1 (354 aa).

The region spanning 23-141 (PSSEQFTVNS…EEAIAEVKVT (119 aa)) is the Ig-like V-type 1 domain. 2 disulfide bridges follow: cysteine 49-cysteine 123 and cysteine 163-cysteine 217. In terms of domain architecture, Ig-like C1-type 2 spans 161–233 (VECNSEGWFP…TGQEERTSIV (73 aa)). Transmembrane regions (helical) follow at residues 243-263 (SVWI…IMMP), 283-303 (LIGI…TITL), and 326-346 (MTVM…LVYF).

Belongs to the SKINT family. In terms of tissue distribution, expressed in the thymus and skin.

The protein localises to the membrane. Functionally, may act by engaging a cell surface molecule on immature T-cells in the embryonic thymus. This Macaca fascicularis (Crab-eating macaque) protein is Selection and upkeep of intraepithelial T-cells protein 1 (SKINT1).